The primary structure comprises 226 residues: Sugar fermentation stimulation protein homolog (226 aa).

Belongs to the SfsA family.

The chain is Sugar fermentation stimulation protein homolog from Ruminiclostridium cellulolyticum (strain ATCC 35319 / DSM 5812 / JCM 6584 / H10) (Clostridium cellulolyticum).